Reading from the N-terminus, the 153-residue chain is Large ribosomal subunit protein uL23m (153 aa).

Residues 131 to 153 (MADEQQRQGSDPQRGGVPNWFSL) form a disordered region.

The protein belongs to the universal ribosomal protein uL23 family. As to quaternary structure, component of the mitochondrial ribosome large subunit (39S) which comprises a 16S rRNA and about 50 distinct proteins.

It is found in the mitochondrion. In Otolemur garnettii (Small-eared galago), this protein is Large ribosomal subunit protein uL23m (MRPL23).